The sequence spans 388 residues: GTPase Obg (388 aa).

An Obg domain is found at 1-159 (MKFVDEATIR…RSLRLELMLL (159 aa)). Positions 160-333 (ADVGLLGMPN…LALKLLDFID (174 aa)) constitute an OBG-type G domain. GTP contacts are provided by residues 166-173 (GMPNAGKS), 191-195 (FTTLV), 213-216 (DIPG), 283-286 (NKAD), and 314-316 (SAY). Mg(2+) is bound by residues Ser173 and Thr193. The tract at residues 356–377 (QNANESVNEDYDDDLDDDDYDD) is disordered. The segment covering 362–377 (VNEDYDDDLDDDDYDD) has biased composition (acidic residues).

This sequence belongs to the TRAFAC class OBG-HflX-like GTPase superfamily. OBG GTPase family. As to quaternary structure, monomer. The cofactor is Mg(2+).

The protein localises to the cytoplasm. An essential GTPase which binds GTP, GDP and possibly (p)ppGpp with moderate affinity, with high nucleotide exchange rates and a fairly low GTP hydrolysis rate. Plays a role in control of the cell cycle, stress response, ribosome biogenesis and in those bacteria that undergo differentiation, in morphogenesis control. This chain is GTPase Obg, found in Shewanella piezotolerans (strain WP3 / JCM 13877).